We begin with the raw amino-acid sequence, 396 residues long: Ribose-phosphate pyrophosphokinase 1, chloroplastic (396 aa).

The N-terminal 36 residues, 1–36 (MPLSYSAAAAAAPSPLAARSRGLLRRPPRSSPVVVR), are a transit peptide targeting the chloroplast. Positions 204, 206, 215, and 219 each coordinate Mg(2+). The interval 290-305 (GKVAVMMDDMIDTAGT) is binding of phosphoribosylpyrophosphate.

It belongs to the ribose-phosphate pyrophosphokinase family. Mg(2+) is required as a cofactor.

It is found in the plastid. The protein resides in the chloroplast. It catalyses the reaction D-ribose 5-phosphate + ATP = 5-phospho-alpha-D-ribose 1-diphosphate + AMP + H(+). In Oryza sativa subsp. japonica (Rice), this protein is Ribose-phosphate pyrophosphokinase 1, chloroplastic.